The sequence spans 37 residues: Large ribosomal subunit protein bL36c (37 aa).

The protein belongs to the bacterial ribosomal protein bL36 family.

It localises to the plastid. The protein resides in the chloroplast. This Jasminum nudiflorum (Winter jasmine) protein is Large ribosomal subunit protein bL36c.